The chain runs to 267 residues: Enolase-phosphatase E1 (267 aa).

Residues D11 and E13 each contribute to the Mg(2+) site. Residues S155–S156 and K189 contribute to the substrate site. A Mg(2+)-binding site is contributed by D215.

The protein belongs to the HAD-like hydrolase superfamily. MasA/MtnC family. Monomer. The cofactor is Mg(2+).

The protein localises to the cytoplasm. Its subcellular location is the nucleus. The catalysed reaction is 5-methylsulfanyl-2,3-dioxopentyl phosphate + H2O = 1,2-dihydroxy-5-(methylsulfanyl)pent-1-en-3-one + phosphate. The protein operates within amino-acid biosynthesis; L-methionine biosynthesis via salvage pathway; L-methionine from S-methyl-5-thio-alpha-D-ribose 1-phosphate: step 3/6. It participates in amino-acid biosynthesis; L-methionine biosynthesis via salvage pathway; L-methionine from S-methyl-5-thio-alpha-D-ribose 1-phosphate: step 4/6. In terms of biological role, bifunctional enzyme that catalyzes the enolization of 2,3-diketo-5-methylthiopentyl-1-phosphate (DK-MTP-1-P) into the intermediate 2-hydroxy-3-keto-5-methylthiopentenyl-1-phosphate (HK-MTPenyl-1-P), which is then dephosphorylated to form the acireductone 1,2-dihydroxy-3-keto-5-methylthiopentene (DHK-MTPene). The sequence is that of Enolase-phosphatase E1 (enoph1) from Dictyostelium discoideum (Social amoeba).